Here is a 567-residue protein sequence, read N- to C-terminus: Interferon lambda receptor 1 (567 aa).

The first 22 residues, M1 to G22, serve as a signal peptide directing secretion. The Extracellular segment spans residues Q23–S229. A Fibronectin type-III domain is found at P26–D121. N29 carries an N-linked (GlcNAc...) asparagine glycan. Disulfide bonds link C74-C82, C86-C149, and C193-C215. N141 is a glycosylation site (N-linked (GlcNAc...) asparagine). A helical membrane pass occupies residues A230 to L250. Residues K251–S567 lie on the Cytoplasmic side of the membrane.

This sequence belongs to the type II cytokine receptor family. Heterodimer with IL10RB.

The protein resides in the membrane. Functionally, the IFNLR1/IL10RB dimer is a receptor for the cytokine ligands IFNL2 and IFNL3 and mediates their antiviral activity. The ligand/receptor complex stimulate the activation of the JAK/STAT signaling pathway leading to the expression of IFN-stimulated genes (ISG), which contribute to the antiviral state. Determines the cell type specificity of the lambda interferon action. Shows a more restricted pattern of expression in the epithelial tissues thereby limiting responses to lambda interferons primarily to epithelial cells of the respiratory, gastrointestinal, and reproductive tracts. This is Interferon lambda receptor 1 (IFNLR1) from Gallus gallus (Chicken).